Consider the following 690-residue polypeptide: Protein arginine N-methyltransferase 7 (690 aa).

2 SAM-dependent MTase PRMT-type domains span residues 14 to 357 (QNSW…YSLW) and 366 to 690 (TKSV…QKKL).

This sequence belongs to the class I-like SAM-binding methyltransferase superfamily. Protein arginine N-methyltransferase family. PRMT7 subfamily. As to expression, expressed at low level in ovary.

Functionally, essential arginine methyltransferase that can both catalyze the formation of omega-N monomethylarginine (MMA) and symmetrical dimethylarginine (sDMA). Specifically mediates the symmetrical dimethylation of arginine residues in the small nuclear ribonucleoproteins SmD1 and SmD3. The chain is Protein arginine N-methyltransferase 7 (Art7) from Drosophila melanogaster (Fruit fly).